A 254-amino-acid polypeptide reads, in one-letter code: Glycerol operon regulatory protein (254 aa).

The 63-residue stretch at 5–67 folds into the HTH iclR-type domain; that stretch reads IQSLERAAAM…DASGRYQLGA (63 aa). Positions 27 to 46 form a DNA-binding region, H-T-H motif; that stretch reads LSDIASSLGLAKGTAHGILR. One can recognise an IclR-ED domain in the interval 82-251; that stretch reads LRARALVWTD…ARAVSRDLGA (170 aa).

Its function is as follows. May be an activator protein for the gylABX operon. The protein is Glycerol operon regulatory protein (gylR) of Streptomyces coelicolor (strain ATCC BAA-471 / A3(2) / M145).